The primary structure comprises 602 residues: Probable translation initiation factor IF-2 (602 aa).

A tr-type G domain is found at Leu9 to Lys229. Residues Gly18 to Thr25 are G1. Position 18–25 (Gly18–Thr25) interacts with GTP. The interval Glu43 to Glu47 is G2. A G3 region spans residues Asp82–Gly85. Residues Asp82–His86 and Asn136–Asp139 contribute to the GTP site. The G4 stretch occupies residues Asn136–Asp139. Residues Ser204–Lys206 form a G5 region.

It belongs to the TRAFAC class translation factor GTPase superfamily. Classic translation factor GTPase family. IF-2 subfamily.

Functionally, function in general translation initiation by promoting the binding of the formylmethionine-tRNA to ribosomes. Seems to function along with eIF-2. This Sulfolobus acidocaldarius (strain ATCC 33909 / DSM 639 / JCM 8929 / NBRC 15157 / NCIMB 11770) protein is Probable translation initiation factor IF-2 (infB).